Reading from the N-terminus, the 533-residue chain is Glucosidase 2 subunit beta (533 aa).

The signal sequence occupies residues 1–13 (MLLLLLLLPMCWA). Ser-23 bears the Phosphoserine mark. LDL-receptor class A domains follow at residues 36–70 (FTCL…AACP) and 71–112 (NGSF…IVCE). 2 cysteine pairs are disulfide-bonded: Cys-38-Cys-57 and Cys-55-Cys-69. Residue Asp-48 participates in substrate binding. Ca(2+)-binding residues include Gln-49, Asp-52, Tyr-54, Asp-56, Asp-62, and Glu-63. Asp-52 lines the substrate pocket. Residue Asn-71 is glycosylated (N-linked (GlcNAc...) asparagine). Disulfide bonds link Cys-76–Cys-98, Cys-96–Cys-111, and Cys-99–Cys-115. Phosphoserine; by PKC is present on Ser-88. Residues Asp-93, Val-95, Asp-97, Asp-103, and Glu-104 each contribute to the Ca(2+) site. The residue at position 165 (Lys-165) is an N6-succinyllysine. Position 167 is a phosphoserine (Ser-167). 2 EF-hand domains span residues 208–243 (RERE…DTDG) and 244–279 (DGAL…RDKY). Ca(2+) is bound by residues Asp-221, Asp-223, Asp-225, and Glu-232. The disordered stretch occupies residues 284-363 (LPTEYPPSPP…SPTEEDRMPP (80 aa)). A compositionally biased stretch (acidic residues) spans 312–336 (TEEEDEDEEDEETEEDEDEEDEDSQ). 2 positions are modified to phosphoserine; by PKC: Ser-388 and Ser-395. Residues 418–519 (SQCYELTTNE…ELMTPAACPE (102 aa)) form the MRH domain. Residues Cys-420 and Cys-433 are joined by a disulfide bond. A Phosphoserine; by PKC modification is found at Ser-439. Disulfide bonds link Cys-476/Cys-505 and Cys-490/Cys-517. N-linked (GlcNAc...) asparagine glycosylation occurs at Asn-481. A Prevents secretion from ER motif is present at residues 530-533 (HDEL).

Heterodimer of a catalytic alpha subunit (GANAB) and a beta subunit (PRKCSH). Binds glycosylated PTPRC. Ubiquitous. Highly expressed in liver, spleen, lung, duodenum, stomach, adrenal gland, pituitary, testis, corpus luteum, uterus and fetal ovary.

It localises to the endoplasmic reticulum. It participates in glycan metabolism; N-glycan metabolism. Functionally, regulatory subunit of glucosidase II that cleaves sequentially the 2 innermost alpha-1,3-linked glucose residues from the Glc(2)Man(9)GlcNAc(2) oligosaccharide precursor of immature glycoproteins. Required for efficient PKD1/Polycystin-1 biogenesis and trafficking to the plasma membrane of the primary cilia. The protein is Glucosidase 2 subunit beta (PRKCSH) of Bos taurus (Bovine).